Reading from the N-terminus, the 226-residue chain is Glutathione S-transferase kappa 1 (226 aa).

16–18 (SPY) is a glutathione binding site. N6-succinyllysine is present on K49. N53 serves as a coordination point for glutathione. K71 and K85 each carry N6-acetyllysine. K116 carries the post-translational modification N6-acetyllysine; alternate. K116 carries the post-translational modification N6-succinyllysine; alternate. K144 carries the N6-succinyllysine modification. K158 is modified (N6-acetyllysine; alternate). K158 bears the N6-succinyllysine; alternate mark. N6-acetyllysine occurs at positions 165 and 169. Residues L183 and 200-201 (SD) each bind glutathione.

This sequence belongs to the GST superfamily. Kappa family. As to quaternary structure, homodimer. Ubiquitous.

Its subcellular location is the peroxisome. The enzyme catalyses RX + glutathione = an S-substituted glutathione + a halide anion + H(+). Its function is as follows. Glutathione S-transferase that catalyzes the conjugation of glutathione to exogenous and endogenous compounds. Significant glutathione conjugating activity is found only with the model substrate, 1-chloro-2,4-dinitrobenzene (CDNB). This Homo sapiens (Human) protein is Glutathione S-transferase kappa 1 (GSTK1).